We begin with the raw amino-acid sequence, 880 residues long: Tyrosine-protein kinase receptor TYRO3 (880 aa).

A signal peptide spans 1–30; sequence MALRRSMGRPGLRPLLLAGLASLLLPGSAA. 2 Ig-like C2-type domains span residues 31–118 and 129–210; these read AGLK…TKIS and PFFT…AIIR. The Extracellular segment spans residues 31-419; sequence AGLKLMGAPV…QGPPHSRTSW (389 aa). N-linked (GlcNAc...) asparagine glycans are attached at residues asparagine 53, asparagine 75, asparagine 181, asparagine 220, asparagine 230, asparagine 283, asparagine 356, and asparagine 370. Cystine bridges form between cysteine 54–cysteine 107 and cysteine 150–cysteine 193. Fibronectin type-III domains lie at 217–310 and 315–406; these read APFN…TKGL and APQN…SHDH. The helical transmembrane segment at 420-440 threads the bilayer; the sequence is VPVVLGVLTALITAAALALIL. Over 441 to 880 the chain is Cytoplasmic; sequence LRKRRKETRF…QQGLLPHSSC (440 aa). The residue at position 456 (serine 456) is a Phosphoserine. Positions 508 to 785 constitute a Protein kinase domain; that stretch reads FTLGRMLGKG…LENILGHLSV (278 aa). ATP contacts are provided by residues 514–522 and lysine 540; that span reads LGKGEFGSV. Catalysis depends on aspartate 645, which acts as the Proton acceptor. A phosphotyrosine; by autocatalysis mark is found at tyrosine 671, tyrosine 675, tyrosine 676, and tyrosine 794. Disordered stretches follow at residues 804–827 and 842–864; these read AENG…GSGM and SPGG…LNEN. Phosphoserine occurs at positions 808 and 859. Over residues 852 to 864 the composition is skewed to polar residues; sequence QLEQQPESPLNEN.

This sequence belongs to the protein kinase superfamily. Tyr protein kinase family. AXL/UFO subfamily. In terms of assembly, monomer and homodimer. Interacts (via N-terminus) with extracellular ligands TULP1 and GAS6. Interacts with PIK3R1; this interaction increases PI3-kinase activity. In terms of processing, autophosphorylated. In terms of tissue distribution, abundant in the brain and lower levels in other tissues.

It localises to the cell membrane. It catalyses the reaction L-tyrosyl-[protein] + ATP = O-phospho-L-tyrosyl-[protein] + ADP + H(+). In terms of biological role, receptor tyrosine kinase that transduces signals from the extracellular matrix into the cytoplasm by binding to several ligands including TULP1 or GAS6. Regulates many physiological processes including cell survival, migration and differentiation. Ligand binding at the cell surface induces dimerization and autophosphorylation of TYRO3 on its intracellular domain that provides docking sites for downstream signaling molecules. Following activation by ligand, interacts with PIK3R1 and thereby enhances PI3-kinase activity. Activates the AKT survival pathway, including nuclear translocation of NF-kappa-B and up-regulation of transcription of NF-kappa-B-regulated genes. TYRO3 signaling plays a role in various processes such as neuron protection from excitotoxic injury, platelet aggregation and cytoskeleton reorganization. Also plays an important role in inhibition of Toll-like receptors (TLRs)-mediated innate immune response by activating STAT1, which selectively induces production of suppressors of cytokine signaling SOCS1 and SOCS3. The sequence is that of Tyrosine-protein kinase receptor TYRO3 (Tyro3) from Rattus norvegicus (Rat).